The chain runs to 231 residues: Orotidine 5'-phosphate decarboxylase (231 aa).

Substrate contacts are provided by residues aspartate 11, lysine 33, 60–69 (DLKFHDIPNT), threonine 120, arginine 181, glutamine 190, glycine 210, and arginine 211. The Proton donor role is filled by lysine 62.

Belongs to the OMP decarboxylase family. Type 1 subfamily. Homodimer.

It catalyses the reaction orotidine 5'-phosphate + H(+) = UMP + CO2. It participates in pyrimidine metabolism; UMP biosynthesis via de novo pathway; UMP from orotate: step 2/2. In terms of biological role, catalyzes the decarboxylation of orotidine 5'-monophosphate (OMP) to uridine 5'-monophosphate (UMP). This Vibrio cholerae serotype O1 (strain ATCC 39315 / El Tor Inaba N16961) protein is Orotidine 5'-phosphate decarboxylase.